The chain runs to 462 residues: Hydroxymethylglutaryl-CoA synthase (462 aa).

Glu-92 (proton donor/acceptor) is an active-site residue. The active-site Acyl-thioester intermediate is the Cys-124. Cys-124, Thr-167, Ser-219, His-257, Lys-266, Asn-327, and Ser-360 together coordinate (3S)-3-hydroxy-3-methylglutaryl-CoA. His-257 serves as the catalytic Proton donor/acceptor. Residue Lys-408 forms a Glycyl lysine isopeptide (Lys-Gly) (interchain with G-Cter in SUMO) linkage.

The protein belongs to the thiolase-like superfamily. HMG-CoA synthase family. Post-translationally, ubiquitinated.

The enzyme catalyses acetoacetyl-CoA + acetyl-CoA + H2O = (3S)-3-hydroxy-3-methylglutaryl-CoA + CoA + H(+). It participates in metabolic intermediate biosynthesis; (R)-mevalonate biosynthesis; (R)-mevalonate from acetyl-CoA: step 2/3. Its function is as follows. This enzyme condenses acetyl-CoA with acetoacetyl-CoA to form HMG-CoA, which is the substrate for HMG-CoA reductase. This Caenorhabditis elegans protein is Hydroxymethylglutaryl-CoA synthase.